The chain runs to 429 residues: Gamma-glutamyl phosphate reductase (429 aa).

The protein belongs to the gamma-glutamyl phosphate reductase family.

Its subcellular location is the cytoplasm. It catalyses the reaction L-glutamate 5-semialdehyde + phosphate + NADP(+) = L-glutamyl 5-phosphate + NADPH + H(+). The protein operates within amino-acid biosynthesis; L-proline biosynthesis; L-glutamate 5-semialdehyde from L-glutamate: step 2/2. Catalyzes the NADPH-dependent reduction of L-glutamate 5-phosphate into L-glutamate 5-semialdehyde and phosphate. The product spontaneously undergoes cyclization to form 1-pyrroline-5-carboxylate. This chain is Gamma-glutamyl phosphate reductase, found in Rhizorhabdus wittichii (strain DSM 6014 / CCUG 31198 / JCM 15750 / NBRC 105917 / EY 4224 / RW1) (Sphingomonas wittichii).